The primary structure comprises 493 residues: Cysteine--tRNA ligase (493 aa).

Residue Cys29 coordinates Zn(2+). The short motif at 31 to 41 is the 'HIGH' region element; that stretch reads VTVYDLCHLGH. A disordered region spans residues 154–179; that stretch reads KLSGRDPDDQQQGASGRTADGEESRK. Zn(2+) contacts are provided by Cys213, His238, and Glu242. A 'KMSKS' region motif is present at residues 270–274; that stretch reads KMSKS. Residue Lys273 participates in ATP binding.

This sequence belongs to the class-I aminoacyl-tRNA synthetase family. In terms of assembly, monomer. It depends on Zn(2+) as a cofactor.

Its subcellular location is the cytoplasm. The enzyme catalyses tRNA(Cys) + L-cysteine + ATP = L-cysteinyl-tRNA(Cys) + AMP + diphosphate. The protein is Cysteine--tRNA ligase of Synechococcus sp. (strain CC9605).